Consider the following 306-residue polypeptide: UDP-3-O-acyl-N-acetylglucosamine deacetylase (306 aa).

His79, His238, and Asp242 together coordinate Zn(2+). His265 (proton donor) is an active-site residue.

It belongs to the LpxC family. The cofactor is Zn(2+).

The catalysed reaction is a UDP-3-O-[(3R)-3-hydroxyacyl]-N-acetyl-alpha-D-glucosamine + H2O = a UDP-3-O-[(3R)-3-hydroxyacyl]-alpha-D-glucosamine + acetate. The protein operates within glycolipid biosynthesis; lipid IV(A) biosynthesis; lipid IV(A) from (3R)-3-hydroxytetradecanoyl-[acyl-carrier-protein] and UDP-N-acetyl-alpha-D-glucosamine: step 2/6. In terms of biological role, catalyzes the hydrolysis of UDP-3-O-myristoyl-N-acetylglucosamine to form UDP-3-O-myristoylglucosamine and acetate, the committed step in lipid A biosynthesis. This is UDP-3-O-acyl-N-acetylglucosamine deacetylase from Shewanella oneidensis (strain ATCC 700550 / JCM 31522 / CIP 106686 / LMG 19005 / NCIMB 14063 / MR-1).